A 495-amino-acid chain; its full sequence is Iroquois-class homeodomain protein irx-4-B (495 aa).

Positions 141–203 form a DNA-binding region, homeobox; TALE-type; sequence GSTRRKNATR…NARRRLKKEN (63 aa). The segment at 203 to 245 is disordered; it reads NKMTWPPRNKCSDEKRPYDEEEEEEEDSQKATIKNEKKTVDEE. The segment covering 235 to 245 has biased composition (basic and acidic residues); the sequence is IKNEKKTVDEE.

This sequence belongs to the TALE/IRO homeobox family.

It is found in the nucleus. Functionally, acts partially redundantly with other irx members in neural patterning. Required for formation of the posterior forebrain, midbrain, hindbrain, and to a lesser extent, spinal cord. Patterns the neuroectoderm in both the anterior/posterior and dorsal/ventral axes. Does not appear to play a role in pronephros kidney development. The chain is Iroquois-class homeodomain protein irx-4-B (irx4-b) from Xenopus laevis (African clawed frog).